Consider the following 227-residue polypeptide: NAD(P)H-quinone oxidoreductase subunit K, chloroplastic (227 aa).

Residues Cys-43, Cys-44, Cys-108, and Cys-139 each contribute to the [4Fe-4S] cluster site.

This sequence belongs to the complex I 20 kDa subunit family. NDH is composed of at least 16 different subunits, 5 of which are encoded in the nucleus. Requires [4Fe-4S] cluster as cofactor.

It is found in the plastid. It localises to the chloroplast thylakoid membrane. The catalysed reaction is a plastoquinone + NADH + (n+1) H(+)(in) = a plastoquinol + NAD(+) + n H(+)(out). It catalyses the reaction a plastoquinone + NADPH + (n+1) H(+)(in) = a plastoquinol + NADP(+) + n H(+)(out). Its function is as follows. NDH shuttles electrons from NAD(P)H:plastoquinone, via FMN and iron-sulfur (Fe-S) centers, to quinones in the photosynthetic chain and possibly in a chloroplast respiratory chain. The immediate electron acceptor for the enzyme in this species is believed to be plastoquinone. Couples the redox reaction to proton translocation, and thus conserves the redox energy in a proton gradient. The polypeptide is NAD(P)H-quinone oxidoreductase subunit K, chloroplastic (Citrus sinensis (Sweet orange)).